Consider the following 562-residue polypeptide: Furostanol glycoside 26-O-beta-glucosidase (562 aa).

The N-terminal 44 residues, M1–R44, are a transit peptide targeting the chloroplast. Residues Q110, H214, and N259 to E260 each bind a beta-D-glucoside. E260 (proton donor) is an active-site residue. C279 and C285 are oxidised to a cystine. A beta-D-glucoside contacts are provided by residues Y401, E472, W518, E525 to W526, and F534. The active-site Nucleophile is the E472.

It belongs to the glycosyl hydrolase 1 family. In terms of assembly, heterodimer. The N-terminus of the larger subunit is blocked and the smaller subunit might be derived from the larger one.

The protein resides in the plastid. The protein localises to the chloroplast. The enzyme catalyses protodioscin + H2O = 26-deglucoprotodioscin + D-glucose. Its activity is regulated as follows. Partially inhibited by glucono-1,5-lactone, conduritol beta-epoxide and diosgenin, but not by beta-sitosterol or cholesterol. Its function is as follows. Beta-glucosidase involved in saponin metabolism. Highly specific for the cleavage of C-26-bound glucose moiety of furostanol glycosides such as protogracillin and protodioscin. No activity with nuatigenin glycoside. Convers furostanol glycosides to spirostanol glycosides. In Hellenia speciosa (Crepe ginger), this protein is Furostanol glycoside 26-O-beta-glucosidase.